The sequence spans 312 residues: MNKSNTAIDPTNVIEAGPDSSVADVQQKSWKDYLVLAKQGIVTSNLITTFAGIYLAIVYTGTVFTMHLDTMIFALLGAALVMAGGCTLNNYIDRDIDHLMERTKERPTVTGRFSAKHVLLVGLAQAALGIIFLALTTPTAAVIGLIGLFIYVVLYTMWTKRTTTLNTIVGSFSGAVPPLIGWAAIDGGLHLYAWLLFFIMFLWQPPHFLALAMKRVEEYRAAGIPMLPVVAGFEMTKRQMVVYVAALLPVSLMLYPFGLVYTIVAAVLGVGWLALGIAGFKMKDDIKWARLMFVYSLNYLTILFVLMVIVHF.

The Cytoplasmic segment spans residues 1–36 (MNKSNTAIDPTNVIEAGPDSSVADVQQKSWKDYLVL). The chain crosses the membrane as a helical span at residues 37–55 (AKQGIVTSNLITTFAGIYL). The Extracellular segment spans residues 56 to 69 (AIVYTGTVFTMHLD). Residues 70-88 (TMIFALLGAALVMAGGCTL) traverse the membrane as a helical segment. Residues 89–110 (NNYIDRDIDHLMERTKERPTVT) are Cytoplasmic-facing. Residues 111 to 129 (GRFSAKHVLLVGLAQAALG) traverse the membrane as a helical segment. Over 130-138 (IIFLALTTP) the chain is Extracellular. Residues 139 to 157 (TAAVIGLIGLFIYVVLYTM) form a helical membrane-spanning segment. Residues 158 to 228 (WTKRTTTLNT…YRAAGIPMLP (71 aa)) lie on the Cytoplasmic side of the membrane. The helical transmembrane segment at 229 to 247 (VVAGFEMTKRQMVVYVAAL) threads the bilayer. Residues 248–259 (LPVSLMLYPFGL) lie on the Extracellular side of the membrane. A helical membrane pass occupies residues 260-275 (VYTIVAAVLGVGWLAL). Topologically, residues 276-296 (GIAGFKMKDDIKWARLMFVYS) are cytoplasmic. A helical transmembrane segment spans residues 297–307 (LNYLTILFVLM). Topologically, residues 308–312 (VIVHF) are extracellular.

This sequence belongs to the UbiA prenyltransferase family.

The protein localises to the cell membrane. The catalysed reaction is heme b + (2E,6E)-farnesyl diphosphate + H2O = Fe(II)-heme o + diphosphate. The protein operates within porphyrin-containing compound metabolism; heme O biosynthesis; heme O from protoheme: step 1/1. Functionally, converts protoheme IX and farnesyl diphosphate to heme O. The polypeptide is Protoheme IX farnesyltransferase (ctaB) (Alkalihalophilus pseudofirmus (strain ATCC BAA-2126 / JCM 17055 / OF4) (Bacillus pseudofirmus)).